The primary structure comprises 375 residues: Chaperone protein DnaJ (375 aa).

The J domain occupies 5–70 (DYYEVLGVNR…QKKGAYDRYG (66 aa)). The CR-type zinc-finger motif lies at 134 to 212 (GAEKTIRIPT…CGGAGRVKKQ (79 aa)). Residues Cys147, Cys150, Cys164, Cys167, Cys186, Cys189, Cys200, and Cys203 each contribute to the Zn(2+) site. 4 CXXCXGXG motif repeats span residues 147 to 154 (CGTCHGSG), 164 to 171 (CPTCGGAG), 186 to 193 (CPKCHGTG), and 200 to 207 (CGDCGGAG).

It belongs to the DnaJ family. As to quaternary structure, homodimer. Zn(2+) is required as a cofactor.

It localises to the cytoplasm. Participates actively in the response to hyperosmotic and heat shock by preventing the aggregation of stress-denatured proteins and by disaggregating proteins, also in an autonomous, DnaK-independent fashion. Unfolded proteins bind initially to DnaJ; upon interaction with the DnaJ-bound protein, DnaK hydrolyzes its bound ATP, resulting in the formation of a stable complex. GrpE releases ADP from DnaK; ATP binding to DnaK triggers the release of the substrate protein, thus completing the reaction cycle. Several rounds of ATP-dependent interactions between DnaJ, DnaK and GrpE are required for fully efficient folding. Also involved, together with DnaK and GrpE, in the DNA replication of plasmids through activation of initiation proteins. This chain is Chaperone protein DnaJ, found in Azoarcus sp. (strain BH72).